Reading from the N-terminus, the 238-residue chain is Transcription termination/antitermination protein NusG (238 aa).

This sequence belongs to the NusG family.

In terms of biological role, participates in transcription elongation, termination and antitermination. This chain is Transcription termination/antitermination protein NusG, found in Mycobacterium tuberculosis (strain CDC 1551 / Oshkosh).